A 192-amino-acid chain; its full sequence is GTP-dependent dephospho-CoA kinase (192 aa).

GTP contacts are provided by aspartate 49, valine 50, valine 51, aspartate 68, lysine 70, and glutamate 127.

It belongs to the GTP-dependent DPCK family.

The enzyme catalyses 3'-dephospho-CoA + GTP = GDP + CoA + H(+). It participates in cofactor biosynthesis; coenzyme A biosynthesis. In terms of biological role, catalyzes the GTP-dependent phosphorylation of the 3'-hydroxyl group of dephosphocoenzyme A to form coenzyme A (CoA). This is GTP-dependent dephospho-CoA kinase from Halorubrum lacusprofundi (strain ATCC 49239 / DSM 5036 / JCM 8891 / ACAM 34).